The primary structure comprises 631 residues: Iron transport multicopper oxidase FET3 (631 aa).

Positions methionine 1 to alanine 25 are cleaved as a signal peptide. Over alanine 26–lysine 564 the chain is Extracellular. N-linked (GlcNAc...) asparagine glycosylation is found at asparagine 31 and asparagine 81. 2 Plastocyanin-like domains span residues isoleucine 50–glutamate 148 and asparagine 195–asparagine 297. Histidine 85 and histidine 87 together coordinate Cu cation. Residues asparagine 92 and asparagine 117 are each glycosylated (N-linked (GlcNAc...) asparagine). Residues histidine 130 and histidine 132 each contribute to the Cu cation site. Asparagine 199, asparagine 203, asparagine 249, asparagine 270, asparagine 297, asparagine 364, and asparagine 413 each carry an N-linked (GlcNAc...) asparagine glycan. The region spanning asparagine 387–alanine 506 is the Plastocyanin-like 3 domain. The Cu cation site is built by histidine 418, histidine 421, histidine 423, histidine 488, cysteine 489, histidine 490, and histidine 494. A helical transmembrane segment spans residues glycine 565–threonine 585. At tyrosine 586–isoleucine 630 the chain is on the cytoplasmic side. Residues glutamate 610–glutamate 631 are disordered. Over residues aspartate 622–glutamate 631 the composition is skewed to basic and acidic residues.

This sequence belongs to the multicopper oxidase family. Cu cation serves as cofactor.

It is found in the cell membrane. Functionally, iron transport multicopper ferroxidase required for Fe(2+) high affinity uptake. Required to oxidize Fe(2+) and release it from the transporter. Essential component of copper-dependent iron transport. This is Iron transport multicopper oxidase FET3 (FET3) from Kluyveromyces lactis (strain ATCC 8585 / CBS 2359 / DSM 70799 / NBRC 1267 / NRRL Y-1140 / WM37) (Yeast).